The following is a 155-amino-acid chain: MDGQDKASYLDTNKDELPSTIKELAAALGIPLQDCSVPCNFCGNFLDFLELCEFDKKRLCLIWKNYVVTACCRCCCVATATFEFNEYYEQTVLGRDIELATGRSIFEIDVRCQNCLSFLDIIEKLDCCGRGRPFHKVRGGWKGVCRLCKHLYHDW.

Zinc fingers lie at residues 39–75 and 112–148; these read CNFC…CRCC and CQNC…CRLC.

Belongs to the papillomaviridae E6 protein family. Forms homodimers. Interacts with ubiquitin-protein ligase UBE3A/E6-AP; this interaction stimulates UBE3A ubiquitin activity. Interacts with host BAK1.

It localises to the host cytoplasm. The protein localises to the host nucleus. Plays a major role in the induction and maintenance of cellular transformation. E6 associates with host UBE3A/E6-AP ubiquitin-protein ligase and modulates its activity. Protects host keratinocytes from apoptosis by mediating the degradation of host BAK1. May also inhibit host immune response. The protein is Protein E6 of Homo sapiens (Human).